Reading from the N-terminus, the 446-residue chain is Baeyer-Villiger oxidase mdpL (446 aa).

This sequence belongs to the AflY oxidoreductase family. NADPH is required as a cofactor.

Its pathway is secondary metabolite biosynthesis. In terms of biological role, baeyer-Villiger oxidase; part of the gene cluster that mediates the biosynthesis of monodictyphenone, a prenyl xanthone derivative. The pathway begins with the synthesis of atrochrysone thioester by the polyketide synthase (PKS) mdpG. The atrochrysone carboxyl ACP thioesterase mdpF then breaks the thioester bond and releases the atrochrysone carboxylic acid from mdpG. The atrochrysone carboxylic acid is then converted to atrochrysone which is further transformed into emodin anthrone. The next step is performed by the anthrone oxygenase mdpH that catalyzes the oxidation of emodinanthrone to emodin. Emodin is further modified to yield monodictyphenone via several steps involving mdpB, mdpC mdpJ, mdpK and mdpL. These enzymes with xptA, xptB and xptC are also proposed to be involved in the synthesis of shamixanthone from emodin. Especially, direct reduction of emodin by the short chain dehydrogenase mdpC followed by dehydration catalyzed by the scytalone dehydratase-like protein mdpB gives loss of oxygen and formation of chrysophanol intermediate in two simple steps. The chain is Baeyer-Villiger oxidase mdpL from Emericella nidulans (strain FGSC A4 / ATCC 38163 / CBS 112.46 / NRRL 194 / M139) (Aspergillus nidulans).